The primary structure comprises 511 residues: Maturase K (511 aa).

The protein belongs to the intron maturase 2 family. MatK subfamily.

Its subcellular location is the plastid. It localises to the chloroplast. Its function is as follows. Usually encoded in the trnK tRNA gene intron. Probably assists in splicing its own and other chloroplast group II introns. This chain is Maturase K, found in Oryza nivara (Indian wild rice).